Consider the following 231-residue polypeptide: Phosphatidylserine decarboxylase proenzyme (231 aa).

The Schiff-base intermediate with substrate; via pyruvic acid role is filled by Ser-188. A Pyruvic acid (Ser); by autocatalysis modification is found at Ser-188.

This sequence belongs to the phosphatidylserine decarboxylase family. PSD-A subfamily. As to quaternary structure, heterodimer of a large membrane-associated beta subunit and a small pyruvoyl-containing alpha subunit. It depends on pyruvate as a cofactor. Post-translationally, is synthesized initially as an inactive proenzyme. Formation of the active enzyme involves a self-maturation process in which the active site pyruvoyl group is generated from an internal serine residue via an autocatalytic post-translational modification. Two non-identical subunits are generated from the proenzyme in this reaction, and the pyruvate is formed at the N-terminus of the alpha chain, which is derived from the carboxyl end of the proenzyme. The post-translation cleavage follows an unusual pathway, termed non-hydrolytic serinolysis, in which the side chain hydroxyl group of the serine supplies its oxygen atom to form the C-terminus of the beta chain, while the remainder of the serine residue undergoes an oxidative deamination to produce ammonia and the pyruvoyl prosthetic group on the alpha chain.

It localises to the cell membrane. It carries out the reaction a 1,2-diacyl-sn-glycero-3-phospho-L-serine + H(+) = a 1,2-diacyl-sn-glycero-3-phosphoethanolamine + CO2. It functions in the pathway phospholipid metabolism; phosphatidylethanolamine biosynthesis; phosphatidylethanolamine from CDP-diacylglycerol: step 2/2. Functionally, catalyzes the formation of phosphatidylethanolamine (PtdEtn) from phosphatidylserine (PtdSer). This chain is Phosphatidylserine decarboxylase proenzyme, found in Rickettsia prowazekii (strain Madrid E).